Reading from the N-terminus, the 191-residue chain is Large ribosomal subunit protein bL9 (191 aa).

It belongs to the bacterial ribosomal protein bL9 family.

Functionally, binds to the 23S rRNA. The sequence is that of Large ribosomal subunit protein bL9 from Granulibacter bethesdensis (strain ATCC BAA-1260 / CGDNIH1).